The sequence spans 103 residues: Protein FMC1 homolog (103 aa).

Belongs to the FMC1 family.

The protein is Protein FMC1 homolog of Nematostella vectensis (Starlet sea anemone).